The following is a 72-amino-acid chain: Conotoxin TxMMSK-04 (72 aa).

An N-terminal signal peptide occupies residues 1 to 20 (MMSKLGVLLTICLLLFPLTA). Positions 21–51 (VPLDGDQPADRPAERMQDGISSEHHPFFDSV) are excised as a propeptide. Glutamine 55 carries the pyrrolidone carboxylic acid modification. 3 cysteine pairs are disulfide-bonded: cysteine 57/cysteine 71, cysteine 58/cysteine 67, and cysteine 63/cysteine 70. Proline 69 carries the 4-hydroxyproline modification. Cysteine 71 is modified (cysteine amide).

Belongs to the conotoxin M superfamily. Expressed by the venom duct.

The protein resides in the secreted. This Conus textile (Cloth-of-gold cone) protein is Conotoxin TxMMSK-04.